Consider the following 685-residue polypeptide: Multicopper oxidase VdtB (685 aa).

Residues 1–17 (MPAYLLLLACNVLLVLG) form the signal peptide. 2 consecutive Plastocyanin-like domains span residues 26 to 139 (LTWE…IRRK) and 168 to 368 (IMML…RYKN). Asn-71 carries N-linked (GlcNAc...) asparagine glycosylation. His-75, His-77, His-119, and His-121 together coordinate Cu cation. N-linked (GlcNAc...) asparagine glycosylation is found at Asn-178, Asn-229, Asn-253, Asn-432, and Asn-475. Residues 466–585 (DDDLIIRTQN…DNGMAMAILD (120 aa)) form the Plastocyanin-like 3 domain. His-500 serves as a coordination point for Cu cation. An N-linked (GlcNAc...) asparagine glycan is attached at Asn-517. Residues 627 to 647 (SLVWAGGAAVVLLSLFIGGLW) traverse the membrane as a helical segment.

It belongs to the multicopper oxidase family.

The protein localises to the membrane. The enzyme catalyses 4 semiviriditoxin + O2 = 2 (M)-viriditoxin + 2 H2O. It functions in the pathway secondary metabolite biosynthesis. In terms of biological role, multicopper oxidase; part of the gene cluster that mediates the biosynthesis of viriditoxin, one of the 'classical' secondary metabolites produced by fungi and that has antibacterial activity. The first step is performed by the polyketide synthase VdtA which condenses one acetyl-CoA and 6 malonyl-CoA units to form the heptaketide monomer backbone of viriditoxin. The product of VdtA is then O-methylated on C7 by the O-methyltransferase VdtC. The O-methyl group is important for the stereoselective coupling of the monomers at the final step of viriditoxin biosynthesis. The short-chain dehydrogenase/reductase VdtF then acts as a stereospecific reductase converting the pyrone to dihydropyrone via the reduction of the C3-C4 double bond. The FAD-binding monooxygenase VdtE then converts the ketone group into a methyl-ester group to yield semi-viriditoxin. Finally, the laccase VdtB is involved in dimerization of 2 semi-viriditoxin molecules to yield the final viriditoxin. VdtB is responsible for the regioselective 6,6'-coupling of semi-viriditoxin, which yields (M)-viriditoxin and (P)-viriditoxin at a ratio of 1:2. The non-catalytic carboxylesterase-like protein VdtD affects the stereochemistical outcome of the coupling. The highly reducing polyketide synthase VdtX is not involved in viriditoxin synthesis, but might possibly play a role in the production of additional metabolites not identified yet. The protein is Multicopper oxidase VdtB of Byssochlamys spectabilis (Paecilomyces variotii).